The chain runs to 254 residues: DNA-3-methyladenine glycosylase (254 aa).

Basic residues predominate over residues 1–10; that stretch reads MKTPARRSKR. Residues 1–20 are disordered; sequence MKTPARRSKRVNQEESETNV.

This sequence belongs to the DNA glycosylase MPG family.

It localises to the nucleus. The enzyme catalyses Hydrolysis of alkylated DNA, releasing 3-methyladenine, 3-methylguanine, 7-methylguanine and 7-methyladenine.. In terms of biological role, hydrolysis of the deoxyribose N-glycosidic bond to excise 3-methyladenine, and 7-methylguanine from the damaged DNA polymer formed by alkylation lesions. The polypeptide is DNA-3-methyladenine glycosylase (MAG) (Arabidopsis thaliana (Mouse-ear cress)).